A 346-amino-acid polypeptide reads, in one-letter code: MPKTPLLGITEGDPAGIGPEITVQAIHNMADDRSFIPIVYGDPAIISRACSVTGLSETVRRVTSEEHIEPESNVINVVDTGTVPHADSIEWGSVQELAGRAAIASIEAATDAALSGKTDGVVTSPINKEAIWKTGSEFLGHTEMLGSLCGTPDTDTMFVVSGLKIFFATRHMSLREAVDSIRRDLIDHEIHKALRALKVFGCNSPKLAVAALNPHAGEGGHFGTEEIEVLRPAVKSACAEGHNVVGPVPADSVFHKGVIREYDGVLSLYHDQGHIASKTLDFDGTVSVTAGLPILRTSVDHGTAFDIAGQGAASPMTMQSALHVASDFARFVPVIREEYLPSTGRN.

Substrate-binding residues include histidine 141 and threonine 142. A divalent metal cation contacts are provided by histidine 171, histidine 215, and histidine 270. Positions 278 and 296 each coordinate substrate.

Belongs to the PdxA family. PdxA2 subfamily. In terms of assembly, homodimer. Requires a divalent metal cation as cofactor.

The enzyme catalyses 4-O-phospho-D-threonate + NAD(+) = dihydroxyacetone phosphate + CO2 + NADH. Functionally, catalyzes the NAD-dependent oxidation and subsequent decarboxylation of D-threonate 4-phosphate to produce dihydroxyacetone phosphate (DHAP). The chain is Putative D-threonate 4-phosphate dehydrogenase from Cutibacterium acnes (strain DSM 16379 / KPA171202) (Propionibacterium acnes).